Here is a 304-residue protein sequence, read N- to C-terminus: Murein tetrapeptide carboxypeptidase (304 aa).

The Nucleophile role is filled by Ser106. Residues Glu200 and His270 each act as charge relay system in the active site.

Belongs to the peptidase S66 family.

It localises to the cytoplasm. The catalysed reaction is N-acetyl-D-glucosaminyl-N-acetylmuramoyl-L-alanyl-meso-2,6-diaminoheptanedioyl-D-alanine + H2O = N-acetyl-D-glucosaminyl-N-acetylmuramoyl-L-alanyl-meso-2,6-diaminoheptanedioate + D-alanine. It participates in cell wall biogenesis; peptidoglycan recycling. Releases the terminal D-alanine residue from the cytoplasmic tetrapeptide recycling product L-Ala-gamma-D-Glu-meso-Dap-D-Ala. Can also cleave D-Ala from murein derivatives containing the tetrapeptide, i.e. MurNAc-tetrapeptide, UDP-MurNAc-tetrapeptide, GlcNAc-MurNAc-tetrapeptide, and GlcNAc-anhMurNAc-tetrapeptide. Does not act on murein sacculi or cross-linked muropeptides. The tripeptides produced by the LcdA reaction can then be reused as peptidoglycan building blocks; LcdA is thereby involved in murein recycling. The protein is Murein tetrapeptide carboxypeptidase (ldcA) of Escherichia coli O157:H7.